A 101-amino-acid polypeptide reads, in one-letter code: Small ribosomal subunit protein uS14A (101 aa).

Disordered stretches follow at residues 1 to 21 (MAKK…AHHA) and 49 to 73 (QRLP…PRGT). Basic and acidic residues-rich tracts occupy residues 8-21 (AKNE…AHHA) and 61-70 (RNRDAADGRP).

This sequence belongs to the universal ribosomal protein uS14 family. In terms of assembly, part of the 30S ribosomal subunit. Contacts proteins S3 and S10.

Binds 16S rRNA, required for the assembly of 30S particles and may also be responsible for determining the conformation of the 16S rRNA at the A site. This chain is Small ribosomal subunit protein uS14A, found in Kineococcus radiotolerans (strain ATCC BAA-149 / DSM 14245 / SRS30216).